The sequence spans 124 residues: Cytoinsectotoxin-4 (124 aa).

The N-terminal stretch at 1-19 is a signal peptide; the sequence is MKCFILAAALVLAFACIAA. A propeptide spanning residues 20–62 is cleaved from the precursor; sequence SEPAETENEDLDDLSDLEDEEWLDELEEAAEYLESLREFEESR. At Phe-123 the chain carries Phenylalanine amide.

This sequence belongs to the cationic peptide 06 (cytoinsectotoxin) family. As to expression, expressed by the venom gland.

It is found in the secreted. In terms of biological role, insecticidal and antimicrobial peptide. Has insecticidal activity against larvae of flesh fly S.carnaria. Has antibacterial activity against Gram-positive bacterium B.subtilis B-501 (MIC=2.5 uM) and Gram-negative bacterium E.coli DH5alpha (MIC=10 uM). This Lachesana tarabaevi (Spider) protein is Cytoinsectotoxin-4.